Consider the following 307-residue polypeptide: Mitochondrial glycine transporter (307 aa).

Solcar repeat units lie at residues 8-87 (PRNS…MRSS), 115-199 (LTMY…SKQL), and 221-305 (TSTT…LVKR). The next 6 membrane-spanning stretches (helical) occupy residues 14–39 (LIGG…TRIQ), 62–88 (GTLP…RSSL), 121–146 (LLTG…VRYE), 174–197 (GFGA…EKSK), 225–251 (VNTT…KTRM), and 280–298 (GLSM…AWGI).

It belongs to the mitochondrial carrier (TC 2.A.29) family. SLC25A38 subfamily.

The protein resides in the mitochondrion inner membrane. The catalysed reaction is glycine(in) = glycine(out). Functionally, mitochondrial glycine transporter that imports glycine into the mitochondrial matrix. Plays an important role in providing glycine for the first enzymatic step in heme biosynthesis, the condensation of glycine with succinyl-CoA to produce 5-aminolevulinate (ALA) in the mitochondrial matrix. The protein is Mitochondrial glycine transporter of Saccharomyces cerevisiae (strain RM11-1a) (Baker's yeast).